The sequence spans 498 residues: Histone-lysine N-methyltransferase SET5 (498 aa).

Positions 68–94 (KPNDGCTSRSTSCPGGKKKKKSKTDTS) are disordered. The SET domain maps to 108-415 (AGIRGVYFDP…PDDELVISYI (308 aa)).

This sequence belongs to the class V-like SAM-binding methyltransferase superfamily. Histone-lysine methyltransferase family. SET5 subfamily.

The protein resides in the nucleus. Its subcellular location is the chromosome. It is found in the cytoplasm. It carries out the reaction L-lysyl-[histone] + S-adenosyl-L-methionine = N(6)-methyl-L-lysyl-[histone] + S-adenosyl-L-homocysteine + H(+). Its function is as follows. Histone methyltransferase that monomethylates 'Lys-5', 'Lys-8' and 'Lys-12' of histone H4 (H4K5me1, H4K8me1 and H4K12me1, respectively), thereby controlling gene expression and remodeling chromatin structures. This Mycosarcoma maydis (Corn smut fungus) protein is Histone-lysine N-methyltransferase SET5 (SET5).